The sequence spans 670 residues: Solute carrier organic anion transporter family member 1A2 (670 aa).

Residues 1 to 20 (MGETEKRIETHRIRCLSKLK) lie on the Cytoplasmic side of the membrane. The chain crosses the membrane as a helical span at residues 21–40 (MFLLAITCAFVSKTLSGSYM). Over 41–59 (NSMLTQIERQFNIPTSLVG) the chain is Extracellular. A helical transmembrane segment spans residues 60–80 (FINGSFEIGNLLLIIFVSYFG). The Cytoplasmic segment spans residues 81 to 86 (TKLHRP). A helical transmembrane segment spans residues 87-111 (IMIGIGCVVMGLGCFLKSLPHFLMN). At 112-155 (QYEYESTVSVSGNLSSNSFLCMENGTQILRPTQDPSECTKEVKS) the chain is on the extracellular side. N-linked (GlcNAc...) asparagine glycans are attached at residues Asn124 and Asn135. Residues 156-184 (LMWVYVLVGNIVRGMGETPILPLGISYIE) form a helical membrane-spanning segment. Residues 185-203 (DFAKFENSPLYIGLVETGA) are Cytoplasmic-facing. Residues 204 to 224 (IIGPLIGLLLASFCANVYVDT) traverse the membrane as a helical segment. Residues 225-242 (GFVNTDDLIITPTDTRWV) are Extracellular-facing. The helical transmembrane segment at 243–267 (GAWWFGFLICAGVNVLTAIPFFFLP) threads the bilayer. At 268 to 311 (NTLPKEGLETNADIIKNENEDKQKEEVKKEKYGITKDFLPFMKS) the chain is on the cytoplasmic side. A helical membrane pass occupies residues 312–333 (LSCNPIYMLFILVSVIQFNAFV). Residues 334–353 (NMISFMPKYLEQQYGISSSD) lie on the Extracellular side of the membrane. The helical transmembrane segment at 354 to 377 (AIFLMGIYNLPPICIGYIIGGLIM) threads the bilayer. At 378–381 (KKFK) the chain is on the cytoplasmic side. Residues 382-405 (ITVKQAAHIGCWLSLLEYLLYFLS) traverse the membrane as a helical segment. Residues 406–513 (FLMTCENSSV…PDCSLMLQYF (108 aa)) are Extracellular-facing. Residues Asn412 and Asn419 are each glycosylated (N-linked (GlcNAc...) asparagine). Residues 433-488 (NDIFADCNVDCNCPSKIWDPVCGNNGLSYLSACLAGCETSIGTGINMVFQNCSCIQ) enclose the Kazal-like domain. 3 cysteine pairs are disulfide-bonded: Cys439–Cys469, Cys445–Cys465, and Cys454–Cys486. Residues 514–536 (LILSAMSSFIYSLAAIPGYMVLL) form a helical membrane-spanning segment. Residues 537 to 545 (RCMKSEEKS) lie on the Cytoplasmic side of the membrane. A helical transmembrane segment spans residues 546-571 (LGVGLHTFCTRVFAGIPAPIYFGALM). Residues 572-605 (DSTCLHWGTLKCGESGACRIYDSTTFRYIYLGLP) lie on the Extracellular side of the membrane. A helical membrane pass occupies residues 606–623 (AALRGSSFVPALIILILL). Over 624–670 (RKCHLPGENASSGTELIETKVKGKENECKDIYQKSTVLKDDELKTKL) the chain is Cytoplasmic.

This sequence belongs to the organo anion transporter (TC 2.A.60) family. As to expression, higher expression in the brain than in liver and kidney. Expressed in brain neurons in both cortex and hippocampus. Expressed in placental trophoblasts. Also expressed in lung and testes at lower levels. Expressed in the eye (at protein level). Expressed in the retina in the outer and inner nuclear layers, the inner plexiform layer and the ganglion cell layer. Expressed in liver and prostate. In testis, primarily localized to the basal membrane of Sertoli cells and weakly expressed in Leydig cells and within the tubules. Expressed in fetal brain and liver.

The protein resides in the cell membrane. It localises to the basal cell membrane. The enzyme catalyses taurocholate(out) = taurocholate(in). It carries out the reaction glycocholate(out) = glycocholate(in). It catalyses the reaction taurochenodeoxycholate(out) = taurochenodeoxycholate(in). The catalysed reaction is tauroursodeoxycholate(out) = tauroursodeoxycholate(in). The enzyme catalyses dehydroepiandrosterone 3-sulfate(out) = dehydroepiandrosterone 3-sulfate(in). It carries out the reaction estrone 3-sulfate(out) = estrone 3-sulfate(in). It catalyses the reaction 3,3',5'-triiodo-L-thyronine(out) = 3,3',5'-triiodo-L-thyronine(in). The catalysed reaction is L-thyroxine(out) = L-thyroxine(in). The enzyme catalyses taurodeoxycholate(out) = taurodeoxycholate(in). It carries out the reaction glycodeoxycholate(out) = glycodeoxycholate(in). It catalyses the reaction glycochenodeoxycholate(out) = glycochenodeoxycholate(in). The catalysed reaction is glycoursodeoxycholate(out) = glycoursodeoxycholate(in). The enzyme catalyses 17beta-estradiol 17-O-(beta-D-glucuronate)(out) = 17beta-estradiol 17-O-(beta-D-glucuronate)(in). It carries out the reaction prostaglandin E2(out) = prostaglandin E2(in). It catalyses the reaction substance P(out) = substance P(in). Transport activity is inhibited by the grapefruit juice component naringin. In terms of biological role, na(+)-independent transporter that mediates the cellular uptake of a broad range of organic anions such as the endogenous bile salts cholate and deoxycholate, either in their unconjugated or conjugated forms (taurocholate and glycocholate), at the plasmam membrane. Responsible for intestinal absorption of bile acids. Transports dehydroepiandrosterone 3-sulfate (DHEAS), a major circulating steroid secreted by the adrenal cortex, as well as estrone 3-sulfate and 17beta-estradiol 17-O-(beta-D-glucuronate). Mediates apical uptake of all-trans-retinol (atROL) across human retinal pigment epithelium, which is essential to maintaining the integrity of the visual cycle and thus vision. Involved in the uptake of clinically used drugs. Capable of thyroid hormone transport (both T3 or 3,3',5'-triiodo-L-thyronine, and T4 or L-tyroxine). Also transports prostaglandin E2. Plays roles in blood-brain and -cerebrospinal fluid barrier transport of organic anions and signal mediators, and in hormone uptake by neural cells. May also play a role in the reuptake of neuropeptides such as substance P/TAC1 and vasoactive intestinal peptide/VIP released from retinal neurons. May play an important role in plasma and tissue distribution of the structurally diverse chemotherapeutic drugs methotrexate and paclitaxel. Shows a pH-sensitive substrate specificity which may be ascribed to the protonation state of the binding site and leads to a stimulation of substrate transport in an acidic microenvironment. Hydrogencarbonate/HCO3(-) acts as the probable counteranion that exchanges for organic anions. May contribute to regulate the transport of organic compounds in testis across the blood-testis-barrier. The sequence is that of Solute carrier organic anion transporter family member 1A2 (SLCO1A2) from Homo sapiens (Human).